A 428-amino-acid polypeptide reads, in one-letter code: Glucose-1-phosphate adenylyltransferase (428 aa).

Residues tyrosine 114, glycine 179, 194 to 195, and serine 212 contribute to the alpha-D-glucose 1-phosphate site; that span reads EK.

Belongs to the bacterial/plant glucose-1-phosphate adenylyltransferase family. As to quaternary structure, homotetramer.

The enzyme catalyses alpha-D-glucose 1-phosphate + ATP + H(+) = ADP-alpha-D-glucose + diphosphate. The protein operates within glycan biosynthesis; glycogen biosynthesis. Involved in the biosynthesis of ADP-glucose, a building block required for the elongation reactions to produce glycogen. Catalyzes the reaction between ATP and alpha-D-glucose 1-phosphate (G1P) to produce pyrophosphate and ADP-Glc. The sequence is that of Glucose-1-phosphate adenylyltransferase from Yersinia pseudotuberculosis serotype IB (strain PB1/+).